The sequence spans 465 residues: 3-isopropylmalate dehydratase large subunit (465 aa).

Cys347, Cys407, and Cys410 together coordinate [4Fe-4S] cluster.

It belongs to the aconitase/IPM isomerase family. LeuC type 1 subfamily. In terms of assembly, heterodimer of LeuC and LeuD. [4Fe-4S] cluster serves as cofactor.

It carries out the reaction (2R,3S)-3-isopropylmalate = (2S)-2-isopropylmalate. The protein operates within amino-acid biosynthesis; L-leucine biosynthesis; L-leucine from 3-methyl-2-oxobutanoate: step 2/4. Functionally, catalyzes the isomerization between 2-isopropylmalate and 3-isopropylmalate, via the formation of 2-isopropylmaleate. The chain is 3-isopropylmalate dehydratase large subunit from Aeromonas hydrophila subsp. hydrophila (strain ATCC 7966 / DSM 30187 / BCRC 13018 / CCUG 14551 / JCM 1027 / KCTC 2358 / NCIMB 9240 / NCTC 8049).